The following is an 843-amino-acid chain: Receptor-like serine/threonine-protein kinase SD1-7 (843 aa).

Residues 1–31 form the signal peptide; sequence MRSVPNYHHSFFIFLILILFLAFSVSPNTLS. The Bulb-type lectin domain occupies 32–151; the sequence is ATESLTISSN…NNRLLWQSFD (120 aa). The Extracellular portion of the chain corresponds to 32–435; sequence ATESLTISSN…LEDKRIKNEK (404 aa). N-linked (GlcNAc...) asparagine glycosylation is found at asparagine 41, asparagine 92, asparagine 116, asparagine 236, and asparagine 251. An EGF-like; atypical domain is found at 286-322; the sequence is PKDLCDNYKVCGNFGYCDSNSLPNCYCIKGFKPVNEQ. 4 disulfide bridges follow: cysteine 290–cysteine 302, cysteine 296–cysteine 310, cysteine 372–cysteine 397, and cysteine 376–cysteine 382. A PAN domain is found at 341–422; sequence CDGRDGFTRL…GGQDLYVRLA (82 aa). Asparagine 381 carries N-linked (GlcNAc...) asparagine glycosylation. The chain crosses the membrane as a helical span at residues 436-456; that stretch reads IIGSSIGVSILLLLSFVIFHF. Residues 457-843 lie on the Cytoplasmic side of the membrane; that stretch reads WKRKQKRSIT…QITLSVIDAR (387 aa). In terms of domain architecture, Protein kinase spans 519–809; that stretch reads FSNDNKLGQG…AIPQPKRPGF (291 aa). Residues 525–533 and lysine 547 contribute to the ATP site; that span reads LGQGGFGIV. The residue at position 553 (serine 553) is a Phosphoserine. A caM-binding region spans residues 608–625; it reads TRSSNLNWQKRFDIINGI. Aspartate 644 functions as the Proton acceptor in the catalytic mechanism. 2 positions are modified to phosphoserine: serine 648 and serine 661. A Phosphothreonine modification is found at threonine 678. Serine 820 is modified (phosphoserine).

The protein belongs to the protein kinase superfamily. Ser/Thr protein kinase family. Interacts with PUB9, PUB13, PUB14 and PUB38. Post-translationally, autophosphorylated on serine and threonine residues. As to expression, mostly expressed in leaves, and, to a lower extent, in stems and flower buds.

Its subcellular location is the cell membrane. It carries out the reaction L-seryl-[protein] + ATP = O-phospho-L-seryl-[protein] + ADP + H(+). The catalysed reaction is L-threonyl-[protein] + ATP = O-phospho-L-threonyl-[protein] + ADP + H(+). Its function is as follows. Involved in the regulation of cellular expansion and differentiation. Mediates subcellular relocalization of PUB9 from nucleus to plasma membrane in a protein-phosphorylation-dependent manner. May be involved in the abscisic acid-mediated signaling pathway, at least during germination. In Arabidopsis thaliana (Mouse-ear cress), this protein is Receptor-like serine/threonine-protein kinase SD1-7 (SD17).